A 45-amino-acid polypeptide reads, in one-letter code: Photosystem II reaction center protein K (45 aa).

A propeptide spanning residues Met-1 to Ala-8 is cleaved from the precursor. A helical membrane pass occupies residues Leu-24 to Phe-44.

Belongs to the PsbK family. In terms of assembly, PSII is composed of 1 copy each of membrane proteins PsbA, PsbB, PsbC, PsbD, PsbE, PsbF, PsbH, PsbI, PsbJ, PsbK, PsbL, PsbM, PsbT, PsbX, PsbY, PsbZ, Psb30/Ycf12, peripheral proteins PsbO, CyanoQ (PsbQ), PsbU, PsbV and a large number of cofactors. It forms dimeric complexes.

Its subcellular location is the cellular thylakoid membrane. One of the components of the core complex of photosystem II (PSII). PSII is a light-driven water:plastoquinone oxidoreductase that uses light energy to abstract electrons from H(2)O, generating O(2) and a proton gradient subsequently used for ATP formation. It consists of a core antenna complex that captures photons, and an electron transfer chain that converts photonic excitation into a charge separation. In Cyanothece sp. (strain PCC 7425 / ATCC 29141), this protein is Photosystem II reaction center protein K.